Consider the following 318-residue polypeptide: Sol locus transcriptional repressor (318 aa).

TPR repeat units follow at residues 65-98 (ANAY…RPKT), 99-132 (INDV…QPNV), 133-166 (GISY…GSTN), and 167-199 (SVYR…EPEK).

Functionally, transcriptional repressor of the sol locus (adhE/aad, ctfA, ctfB and adc) genes for butanol and acetone formation. The sequence is that of Sol locus transcriptional repressor (solR) from Clostridium acetobutylicum (strain ATCC 824 / DSM 792 / JCM 1419 / IAM 19013 / LMG 5710 / NBRC 13948 / NRRL B-527 / VKM B-1787 / 2291 / W).